Reading from the N-terminus, the 476-residue chain is WD repeat, SAM and U-box domain-containing protein 1 (476 aa).

7 WD repeats span residues aspartate 10–histidine 47, phenylalanine 52–valine 91, proline 95–cysteine 134, valine 137–glutamate 176, alanine 178–glutamate 228, glycine 237–threonine 276, and glutamine 279–alanine 318. Positions tryptophan 332–lysine 396 constitute an SAM domain. The U-box domain maps to glycine 403–lysine 476. Threonine 458 is subject to Phosphothreonine.

The protein is WD repeat, SAM and U-box domain-containing protein 1 (WDSUB1) of Homo sapiens (Human).